Here is a 601-residue protein sequence, read N- to C-terminus: Beta-phellandrene synthase (601 aa).

The N-terminal 35 residues, 1–35 (MSTISIHHVGILRNPLPSKNKRALINNPWSLSLPR), are a transit peptide targeting the chloroplast. Positions 356 and 360 each coordinate Mn(2+). A DDXXD motif motif is present at residues 356–360 (DDVYD). 2 homodimerization regions span residues 362-368 (YGTLDEL) and 434-471 (EAKW…LSIP). Mn(2+) contacts are provided by aspartate 499 and glutamate 507.

It belongs to the terpene synthase family. Homodimer. Mn(2+) is required as a cofactor. It depends on Mg(2+) as a cofactor. In terms of tissue distribution, expressed in peltate glandular trichomes. Present at low levels in flowers, leaves and stems.

Its subcellular location is the plastid. It is found in the chloroplast. The catalysed reaction is (2E)-geranyl diphosphate = beta-phellandrene + diphosphate. It catalyses the reaction (2E)-geranyl diphosphate = (1R,5R)-sabinene + diphosphate. It functions in the pathway secondary metabolite biosynthesis; terpenoid biosynthesis. Involved in the biosynthesis of phenolic monoterpenes natural products. Monoterpene synthase that catalyzes mainly the formation of olefins such as sabinene and beta-phellandrene, and minor amounts of other monoterpenes (e.g. myrcene, gamma-terpinene, alpha-thujene and alpha-pinene) from geranyl diphosphate (GPP). The protein is Beta-phellandrene synthase of Origanum vulgare (Wild marjoram).